Here is a 354-residue protein sequence, read N- to C-terminus: 3-isopropylmalate dehydrogenase (354 aa).

NAD(+) is bound at residue 76 to 87 (GPRWDSAKERPE). Residues R94, R104, R130, and D215 each coordinate substrate. Mg(2+) contacts are provided by D215, D239, and D243. 273 to 285 (GSAPDIAGKNKAN) contacts NAD(+).

This sequence belongs to the isocitrate and isopropylmalate dehydrogenases family. LeuB type 1 subfamily. As to quaternary structure, homodimer. It depends on Mg(2+) as a cofactor. Requires Mn(2+) as cofactor.

It is found in the cytoplasm. The enzyme catalyses (2R,3S)-3-isopropylmalate + NAD(+) = 4-methyl-2-oxopentanoate + CO2 + NADH. Its pathway is amino-acid biosynthesis; L-leucine biosynthesis; L-leucine from 3-methyl-2-oxobutanoate: step 3/4. Its function is as follows. Catalyzes the oxidation of 3-carboxy-2-hydroxy-4-methylpentanoate (3-isopropylmalate) to 3-carboxy-4-methyl-2-oxopentanoate. The product decarboxylates to 4-methyl-2 oxopentanoate. The chain is 3-isopropylmalate dehydrogenase from Bacillus cereus (strain ATCC 10987 / NRS 248).